We begin with the raw amino-acid sequence, 500 residues long: MANKKIRVRYAPSPTGHLHIGNARTALFNYLFARHNKGTLVLRIEDTDTARNVEGGAESQIENLHWLGIDWDEGPDIGGDYGPYKQSERKDIYQKYIDQLLEEGKAYYSFKTEEELEAQREEQRAMGIAPHYVYEYEGMTTDEIKQAQDEARAKGLKPVVRIHIPEGVTYEWDDIVKGHLSFESDTIGGDFVIQKRDGMPTYNFAVVIDDHLMEISHVLRGDDHISNTPKQLCVYEALGWEAPVFGHMTLIINSATGKKLSKRDESVLQFIEQYRELGFLPEAMFNFITLLGWSPVGESEIFSKREFIKQFDPARLSKSPAAFDQKKLDWVNNQYMKTADRDELLDLALHNLQEAGLVEANPAPGKMEWVRQLVNMYANQMSYTKQIVDLSKIFFTEAKYLTDEEVEEIKKDEARPAIEEFKKQLDKLDNFTAKKIMDAIMATRRETGIKGRKLFMPIRIATTRSMVGPGIGEAMELMGKDTVMKHLDLTLKQLSEAGIE.

The short motif at P12–N22 is the 'HIGH' region element. The 'KMSKS' region signature appears at K259 to R263. Residue K262 coordinates ATP.

It belongs to the class-I aminoacyl-tRNA synthetase family. Glutamate--tRNA ligase type 1 subfamily. In terms of assembly, monomer.

The protein resides in the cytoplasm. It catalyses the reaction tRNA(Glu) + L-glutamate + ATP = L-glutamyl-tRNA(Glu) + AMP + diphosphate. Functionally, catalyzes the attachment of glutamate to tRNA(Glu) in a two-step reaction: glutamate is first activated by ATP to form Glu-AMP and then transferred to the acceptor end of tRNA(Glu). The polypeptide is Glutamate--tRNA ligase (Lactobacillus delbrueckii subsp. bulgaricus (strain ATCC BAA-365 / Lb-18)).